The following is a 104-amino-acid chain: Gastrin (104 aa).

The signal sequence occupies residues 1–21 (MQRLCVYVLILALALATFSEA). A propeptide spanning residues 22–58 (SWKPRSRLQDAPSGPGANRGLEPHGLDQLGPASHHRR) is cleaved from the precursor. Positions 22–70 (SWKPRSRLQDAPSGPGANRGLEPHGLDQLGPASHHRRQLGLQGPPQLVA) are disordered. A pyrrolidone carboxylic acid mark is found at glutamine 59 and glutamine 76. Tyrosine 87 carries the post-translational modification Sulfotyrosine. Phenylalanine 92 carries the phenylalanine amide modification. A Phosphoserine modification is found at serine 96. A propeptide spanning residues 96–104 (SAEEGDQRP) is cleaved from the precursor.

The protein belongs to the gastrin/cholecystokinin family.

Its subcellular location is the secreted. Gastrin stimulates the stomach mucosa to produce and secrete hydrochloric acid and the pancreas to secrete its digestive enzymes. It also stimulates smooth muscle contraction and increases blood circulation and water secretion in the stomach and intestine. This chain is Gastrin (GAST), found in Canis lupus familiaris (Dog).